A 1045-amino-acid polypeptide reads, in one-letter code: MAASNWGLIMNIVNSIVGVSVLTMPFCFQQCGILLGTLLLMLCTWMAHHSCMFLVKSASVSKRRTYAGLAFHAYGKVGKMMVETSMIGLMLGTCIAFYVVIGDLGSSFFARLFGLEVSEGFRVFLLFSVSLCIVLPLSLQRNMMAFIQSFSAMALMFYTVFMFVIVLSSFKHGLFSGQWLKHVSYIRWEGVFRCIPIYGMSFACQSQVLPTYDSLDDPSVKIMSSIFALSLNVVTTFYITVGFFGYVSFPETIAGNVLVNFPSNLVTEMIRVGFMMSVAVGFPMMILPCRQALNTLLFEQQQKDGTFTAGGYMPPLRFKILTLVVVFGTMLGGILIPNVETILGLTGATMGSLICLICPALIYKKIHKKGLASQFILGVGLLILVISTYTTLTVTEEPTQIKSELLERIDLKEEKDPEQINSQKSDEKAKVEQPGDNRDKPKLPPKNPEEEQIKGPIEGPQKEKDTKKQEEVQLDRPDQGDIAVPVGEAHRHEPPIPQDEVAVDEKKDQGEREEKKESVVDINSTEKKDKQQINLEKEPEIKDQAEANKGINEPVPQKPPQEVNDPNKQQLVNPPTPRLKEQPPFKDLEGIIKDLAVPVEIKKNAEIAEEKDNNDFANPVKAIENPPIKDEKNEQIPGDPGKESHVEPKAEDNQAEAGKAELLDHAFLLQVIKEQQVQQKRLLDQQEKLLEVIKEQHMEIHQQKGDEDQQDKLEGNIADKNKEELKAEARVAQKPLEGDKLENVGEVNAKVDKPAVEEHVVVVEKEQNPALNQVVKGNVPDVKKNDHKIEAPKINVEEVKVPISAGKHKKQSVQENLIHQQDVDQGASDNYKQREKAVAANKDYVLGHIIQQETANPIDPITLPDLQDKLGKLALHQTEPKQKPVKIAGIGEKKLGAVQEEKILVQKGQEAQADKVIQDNYNPVPDHGLHENNNADAPATINVEAKKEHIEKPKDGAVLEHDEGKQNRDLKLQNDMDLRRKKRDLALVQQENNGAQIISFHPVPNLKVNDLRGALEARLNQMVDGGLQVVQSRKIKQLIDEEKNR.

Transmembrane regions (helical) follow at residues 8–28, 33–53, 85–105, 117–137, 150–170, 226–246, 269–289, 320–340, 342–362, and 375–395; these read LIMN…PFCF, ILLG…SCMF, SMIG…GDLG, VSEG…VLPL, FSAM…LSSF, IFAL…FFGY, MIRV…ILPC, ILTL…PNVE, ILGL…PALI, and FILG…LTVT. Composition is skewed to basic and acidic residues over residues 412–453, 460–479, and 503–546; these read KEEK…EEQI, PQKE…RPDQ, and VDEK…DQAE. Disordered regions lie at residues 412–584 and 606–658; these read KEEK…EQPP and EIAE…AEAG. The span at 564-573 shows a compositional bias: polar residues; it reads NDPNKQQLVN. Residues 627–658 are compositionally biased toward basic and acidic residues; sequence PIKDEKNEQIPGDPGKESHVEPKAEDNQAEAG.

Belongs to the amino acid/polyamine transporter 2 family.

It is found in the membrane. Its function is as follows. Putative sodium-dependent amino acid/proton antiporter. The sequence is that of Putative sodium-coupled neutral amino acid transporter 10 (slc38a10) from Xenopus laevis (African clawed frog).